The chain runs to 137 residues: Large ribosomal subunit protein uL16 (137 aa).

It belongs to the universal ribosomal protein uL16 family. Part of the 50S ribosomal subunit.

Functionally, binds 23S rRNA and is also seen to make contacts with the A and possibly P site tRNAs. In Anaplasma phagocytophilum (strain HZ), this protein is Large ribosomal subunit protein uL16.